The following is a 187-amino-acid chain: Photosystem I assembly protein Ycf4 (187 aa).

Helical transmembrane passes span 25-47 and 62-84; these read YWWASVVLLGASGFLIVGISSYL and FVPQGLVMCFYGSAGILLSIYLW.

Belongs to the Ycf4 family.

It is found in the plastid. The protein resides in the chloroplast thylakoid membrane. Its function is as follows. Seems to be required for the assembly of the photosystem I complex. The polypeptide is Photosystem I assembly protein Ycf4 (Mesostigma viride (Green alga)).